A 424-amino-acid chain; its full sequence is S-phase kinase-associated protein 2 (424 aa).

Positions 52-73 are disordered; that stretch reads PHGLLSNLGHPQSPPRKRVKGK. Ser64 carries the phosphoserine modification. A Nuclear localization signal motif is present at residues 67 to 73; that stretch reads RKRVKGK. 2 positions are modified to N6-acetyllysine; by p300/EP300: Lys68 and Lys71. Ser75 bears the Phosphoserine mark. In terms of domain architecture, F-box spans 94-140; that stretch reads GVSWDSLPDELLLGIFSCLCLPELLRVSGVCKRWYRLSLDESLWQSL. LRR repeat units lie at residues 151–176, 177–204, 210–234, 235–257, 258–284, 286–308, 309–330, 334–356, 359–378, and 380–401; these read VTVRLLSRGVVAFRCPRSFMEQPLGE, SFSSFRVQHMDLSNSVINVSNLHKILSE, NLSLEGLQLSDPIVKTLAQNENLVR, LNLCGCSGFSESAVATLLSSCSR, LDELNLSWCFDFTEKHVQAAVAHLPNT, TQLNLSGYRKNLQKTDLCTIIKR, CPNLIRLDLSDSIMLKNDCFPE, LNYLQHLSLSRCYDIIPDTLLEL, IPTLKTLQVFGIVPEGTLQL, and REALPRLQINCAYFTTIARPTM. Ser179 is modified (phosphoserine).

In terms of assembly, part of a SCF(SKP2) complex consisting of CUL1, RBX1, SKP1 and SKP2. Component of a SCF(SKP2)-like complex containing CUL1, SKP1, TRIM21 and SKP2. Interacts directly with CUL1 and SKP1. Interacts with ASB2 which is the substrate-recognition component of a probable ECS E3 ubiquitin-protein ligase complex; ASB2 is likely to bridge the formation of dimeric E3-ubiquitin-protein ligase complexes composed of an ECS complex and an SCF(SKP2) complex. Interacts with CKS1. Interacts with the cyclin-A-CDK2 complex. Interacts with ORC1, phosphorylated CDT1, phosphorylated RBL2, ELF4, phosphorylated RAG2, FOXO1, UBP43, MYC, TOB1, TAL1 and KMT2A/MLL1. Interacts with TRIM21. Interacts with cyclin-E. Interacts with CARM1. In terms of processing, phosphorylated on serine and threonine resudues in response to DNA damage, promoting 'Lys-63'-linked ubiquitination of NBN. Ubiquitinated by the APC/C complex, leading to its degradation by the proteasome. Deubiquitinated by USP13. Post-translationally, acetylation at Lys-68 and Lys-71 increases stability through impairment of APC/C-mediated proteolysis and promotes cytoplasmic retention. Deacetylated by SIRT3.

The protein localises to the cytoplasm. It localises to the nucleus. Its pathway is protein modification; protein ubiquitination. Functionally, substrate recognition component of a SCF (SKP1-CUL1-F-box protein) E3 ubiquitin-protein ligase complex which mediates the ubiquitination and subsequent proteasomal degradation of target proteins involved in cell cycle progression, signal transduction and transcription. Specifically recognizes phosphorylated CDKN1B/p27kip and is involved in regulation of G1/S transition. Degradation of CDKN1B/p27kip also requires CKS1. Recognizes target proteins ORC1, CDT1, RBL2, KMT2A/MLL1, CDK9, RAG2, NBN, FOXO1, UBP43, YTHDF2, and probably MYC, TOB1 and TAL1. Degradation of TAL1 also requires STUB1. Recognizes CDKN1A in association with CCNE1 or CCNE2 and CDK2. Promotes ubiquitination and destruction of CDH1 in a CK1-dependent manner, thereby regulating cell migration. Following phosphorylation in response to DNA damage, mediates 'Lys-63'-linked ubiquitination of NBN, promoting ATM recruitment to DNA damage sites and DNA repair via homologous recombination. Through the ubiquitin-mediated proteasomal degradation of viral proteins may have an antiviral activity. The protein is S-phase kinase-associated protein 2 (Skp2) of Mus musculus (Mouse).